We begin with the raw amino-acid sequence, 292 residues long: Shikimate dehydrogenase (NADP(+)) (292 aa).

Shikimate contacts are provided by residues 22–24 and serine 69; that span reads SLS. Catalysis depends on lysine 73, which acts as the Proton acceptor. Shikimate-binding residues include asparagine 94 and aspartate 111. Residues 135–139 and isoleucine 236 each bind NADP(+); that span reads GVGGA. Tyrosine 238 provides a ligand contact to shikimate. An NADP(+)-binding site is contributed by glycine 260.

It belongs to the shikimate dehydrogenase family. As to quaternary structure, homodimer.

The catalysed reaction is shikimate + NADP(+) = 3-dehydroshikimate + NADPH + H(+). It functions in the pathway metabolic intermediate biosynthesis; chorismate biosynthesis; chorismate from D-erythrose 4-phosphate and phosphoenolpyruvate: step 4/7. Functionally, involved in the biosynthesis of the chorismate, which leads to the biosynthesis of aromatic amino acids. Catalyzes the reversible NADPH linked reduction of 3-dehydroshikimate (DHSA) to yield shikimate (SA). The chain is Shikimate dehydrogenase (NADP(+)) from Streptococcus pyogenes serotype M3 (strain ATCC BAA-595 / MGAS315).